A 136-amino-acid polypeptide reads, in one-letter code: NADPH-dependent 7-cyano-7-deazaguanine reductase (136 aa).

The active-site Thioimide intermediate is the Cys50. Asp57 (proton donor) is an active-site residue. Substrate-binding positions include 72–74 (YEL) and 91–92 (HE).

Belongs to the GTP cyclohydrolase I family. QueF type 1 subfamily.

Its subcellular location is the cytoplasm. It catalyses the reaction 7-aminomethyl-7-carbaguanine + 2 NADP(+) = 7-cyano-7-deazaguanine + 2 NADPH + 3 H(+). It participates in tRNA modification; tRNA-queuosine biosynthesis. Functionally, catalyzes the NADPH-dependent reduction of 7-cyano-7-deazaguanine (preQ0) to 7-aminomethyl-7-deazaguanine (preQ1). The chain is NADPH-dependent 7-cyano-7-deazaguanine reductase from Prochlorococcus marinus (strain MIT 9301).